The sequence spans 301 residues: Protein FAM221A (301 aa).

The segment at Met-235–Tyr-271 is disordered.

It belongs to the FAM221 family.

The sequence is that of Protein FAM221A (Fam221a) from Mus musculus (Mouse).